A 404-amino-acid polypeptide reads, in one-letter code: Cysteine desulfurase IscS (404 aa).

Residues 75 to 76 (AT), asparagine 155, glutamine 183, and 203 to 205 (SAH) each bind pyridoxal 5'-phosphate. The residue at position 206 (lysine 206) is an N6-(pyridoxal phosphate)lysine. Threonine 243 contributes to the pyridoxal 5'-phosphate binding site. The Cysteine persulfide intermediate role is filled by cysteine 328. Cysteine 328 contributes to the [2Fe-2S] cluster binding site.

It belongs to the class-V pyridoxal-phosphate-dependent aminotransferase family. NifS/IscS subfamily. Homodimer. Forms a heterotetramer with IscU, interacts with other sulfur acceptors. Pyridoxal 5'-phosphate serves as cofactor.

The protein localises to the cytoplasm. It carries out the reaction (sulfur carrier)-H + L-cysteine = (sulfur carrier)-SH + L-alanine. Its pathway is cofactor biosynthesis; iron-sulfur cluster biosynthesis. In terms of biological role, master enzyme that delivers sulfur to a number of partners involved in Fe-S cluster assembly, tRNA modification or cofactor biosynthesis. Catalyzes the removal of elemental sulfur atoms from cysteine to produce alanine. Functions as a sulfur delivery protein for Fe-S cluster synthesis onto IscU, an Fe-S scaffold assembly protein, as well as other S acceptor proteins. The chain is Cysteine desulfurase IscS from Neisseria meningitidis serogroup C (strain 053442).